The sequence spans 131 residues: Small ribosomal subunit protein uS8 (131 aa).

This sequence belongs to the universal ribosomal protein uS8 family. As to quaternary structure, part of the 30S ribosomal subunit. Contacts proteins S5 and S12.

Its function is as follows. One of the primary rRNA binding proteins, it binds directly to 16S rRNA central domain where it helps coordinate assembly of the platform of the 30S subunit. The chain is Small ribosomal subunit protein uS8 from Nitrosospira multiformis (strain ATCC 25196 / NCIMB 11849 / C 71).